A 101-amino-acid chain; its full sequence is NAD(P)H-quinone oxidoreductase subunit 4L, chloroplastic (101 aa).

Helical transmembrane passes span 2 to 22 (MLEHVLVLSAYLFSIGIYGLI), 32 to 52 (MCLELILNAVNINLVTFSDLF), and 61 to 81 (IFSIFVIAIAAAEAAIGPAIV).

This sequence belongs to the complex I subunit 4L family. NDH is composed of at least 16 different subunits, 5 of which are encoded in the nucleus.

Its subcellular location is the plastid. It is found in the chloroplast thylakoid membrane. The catalysed reaction is a plastoquinone + NADH + (n+1) H(+)(in) = a plastoquinol + NAD(+) + n H(+)(out). It carries out the reaction a plastoquinone + NADPH + (n+1) H(+)(in) = a plastoquinol + NADP(+) + n H(+)(out). NDH shuttles electrons from NAD(P)H:plastoquinone, via FMN and iron-sulfur (Fe-S) centers, to quinones in the photosynthetic chain and possibly in a chloroplast respiratory chain. The immediate electron acceptor for the enzyme in this species is believed to be plastoquinone. Couples the redox reaction to proton translocation, and thus conserves the redox energy in a proton gradient. In Illicium oligandrum (Star anise), this protein is NAD(P)H-quinone oxidoreductase subunit 4L, chloroplastic.